The sequence spans 62 residues: Large ribosomal subunit protein bL28 (62 aa).

It belongs to the bacterial ribosomal protein bL28 family.

The protein is Large ribosomal subunit protein bL28 of Caldanaerobacter subterraneus subsp. tengcongensis (strain DSM 15242 / JCM 11007 / NBRC 100824 / MB4) (Thermoanaerobacter tengcongensis).